A 689-amino-acid chain; its full sequence is Beta-adrenergic receptor kinase 1 (689 aa).

The segment at 1–190 (MADLEAVLAD…ELNIHLTMND (190 aa)) is N-terminal. One can recognise an RGS domain in the interval 54 to 175 (TFEKIFSQKL…IESDKFTRFC (122 aa)). A Protein kinase domain is found at 191 to 453 (FSVHRIIGRG…AQEVKESPFF (263 aa)). ATP-binding positions include 197–205 (IGRGGFGEV) and Lys220. The Proton acceptor role is filled by Asp317. The 68-residue stretch at 454–521 (RSLDWQMVFL…TISERWQQEV (68 aa)) folds into the AGC-kinase C-terminal domain. The region spanning 558 to 652 (DCIMHGYMSK…WKKELRDAYR (95 aa)) is the PH domain. Ser670 bears the Phosphoserine mark.

It belongs to the protein kinase superfamily. AGC Ser/Thr protein kinase family. GPRK subfamily. Interacts with the heterodimer formed by GNB1 and GNG2. Interacts with GIT1. Interacts with, and phosphorylates chemokine-stimulated CCR5. Interacts with ARRB1. Interacts with LPAR1 and LPAR2. Interacts with RALA in response to LPAR1 activation. ADRBK1 and RALA mutually inhibit each other's binding to LPAR1. Interacts with ADRB2. As to expression, expressed in peripheral blood leukocytes.

It localises to the cytoplasm. It is found in the cell membrane. The protein resides in the postsynapse. Its subcellular location is the presynapse. The catalysed reaction is [beta-adrenergic receptor] + ATP = [beta-adrenergic receptor]-phosphate + ADP + H(+). Its activity is regulated as follows. In contrast to other AGC family kinases, the catalytic activity is solely regulated by the binding of substrates and ligands, not by phosphorylation of the kinase domain. In terms of biological role, specifically phosphorylates the agonist-occupied form of the beta-adrenergic and closely related receptors, probably inducing a desensitization of them. Key regulator of LPAR1 signaling. Competes with RALA for binding to LPAR1 thus affecting the signaling properties of the receptor. Desensitizes LPAR1 and LPAR2 in a phosphorylation-independent manner. Positively regulates ciliary smoothened (SMO)-dependent Hedgehog (Hh) signaling pathway by facilitating the trafficking of SMO into the cilium and the stimulation of SMO activity. Inhibits relaxation of airway smooth muscle in response to blue light. In Homo sapiens (Human), this protein is Beta-adrenergic receptor kinase 1.